Reading from the N-terminus, the 208-residue chain is Large ribosomal subunit protein uL3 (208 aa).

Residues 116-148 are disordered; the sequence is GFQGVIKRHGQSRGPMAHGSRYHRRPGSMGPVA.

Belongs to the universal ribosomal protein uL3 family. In terms of assembly, part of the 50S ribosomal subunit. Forms a cluster with proteins L14 and L19.

Functionally, one of the primary rRNA binding proteins, it binds directly near the 3'-end of the 23S rRNA, where it nucleates assembly of the 50S subunit. This Streptococcus agalactiae serotype Ia (strain ATCC 27591 / A909 / CDC SS700) protein is Large ribosomal subunit protein uL3.